A 103-amino-acid polypeptide reads, in one-letter code: Small ribosomal subunit protein uS10 (103 aa).

This sequence belongs to the universal ribosomal protein uS10 family. As to quaternary structure, part of the 30S ribosomal subunit.

Its function is as follows. Involved in the binding of tRNA to the ribosomes. The protein is Small ribosomal subunit protein uS10 of Shewanella baltica (strain OS223).